We begin with the raw amino-acid sequence, 92 residues long: Small ribosomal subunit protein uS19 (92 aa).

The protein belongs to the universal ribosomal protein uS19 family.

Its function is as follows. Protein S19 forms a complex with S13 that binds strongly to the 16S ribosomal RNA. This is Small ribosomal subunit protein uS19 from Legionella pneumophila (strain Paris).